A 347-amino-acid polypeptide reads, in one-letter code: Probable G-protein coupled receptor 148 (347 aa).

Topologically, residues 1-51 are extracellular; that stretch reads MGDELAPCPVGTTAWPALIQLISKTPCMPQAASNTSLGLGDLRVPSSMLYW. N-linked (GlcNAc...) asparagine glycosylation occurs at asparagine 34. A helical transmembrane segment spans residues 52-72; the sequence is LFLPSSLLAAATLAVSPLLLV. Residues 73–85 are Cytoplasmic-facing; sequence TILRNQRLRQEPH. Residues 86-106 form a helical membrane-spanning segment; the sequence is YLLPANILLSDLAYILLHMLI. At 107-130 the chain is on the extracellular side; sequence SSSSLGGWELGRMACGILTDAVFA. The helical transmembrane segment at 131–151 threads the bilayer; that stretch reads ACTSTILSFTAIVLHTYLAVI. Residues 152–165 lie on the Cytoplasmic side of the membrane; the sequence is HPLRYLSFMSHGAA. Residues 166–186 form a helical membrane-spanning segment; sequence WKAVALIWLVACCFPTFLIWL. Residues 187–214 are Extracellular-facing; sequence SKWQDAQLEEQGASYILPPSMGTQPGCG. A helical membrane pass occupies residues 215–235; the sequence is LLVIVTYTSILCVLFLCTALI. Over 236–261 the chain is Cytoplasmic; the sequence is ANCFWRIYAEAKTSGIWGQGYSRARG. A helical transmembrane segment spans residues 262-282; sequence TLLIHSVLITLYVSTGVVFSL. The Extracellular portion of the chain corresponds to 283–299; sequence DMVLTRYHHIDSGTHTW. The chain crosses the membrane as a helical span at residues 300-322; the sequence is LLAANSEVLMMLPRAMLTYLYLL. Residues 323–347 are Cytoplasmic-facing; sequence RYRQLLGMVRGHLPSRRHQAIFTIS.

It belongs to the G-protein coupled receptor 1 family. In terms of tissue distribution, expression restricted to nervous system and testis. Is also detected in several tumors types, most notably prostate cancer.

The protein resides in the cell membrane. Its function is as follows. Orphan receptor. This Homo sapiens (Human) protein is Probable G-protein coupled receptor 148 (GPR148).